Here is a 519-residue protein sequence, read N- to C-terminus: Glutamate--cysteine ligase (519 aa).

It belongs to the glutamate--cysteine ligase type 1 family. Type 1 subfamily.

The enzyme catalyses L-cysteine + L-glutamate + ATP = gamma-L-glutamyl-L-cysteine + ADP + phosphate + H(+). It participates in sulfur metabolism; glutathione biosynthesis; glutathione from L-cysteine and L-glutamate: step 1/2. In Yersinia enterocolitica serotype O:8 / biotype 1B (strain NCTC 13174 / 8081), this protein is Glutamate--cysteine ligase.